Reading from the N-terminus, the 213-residue chain is N-(5'-phosphoribosyl)anthranilate isomerase (213 aa).

The protein belongs to the TrpF family.

The enzyme catalyses N-(5-phospho-beta-D-ribosyl)anthranilate = 1-(2-carboxyphenylamino)-1-deoxy-D-ribulose 5-phosphate. It participates in amino-acid biosynthesis; L-tryptophan biosynthesis; L-tryptophan from chorismate: step 3/5. The chain is N-(5'-phosphoribosyl)anthranilate isomerase from Methylibium petroleiphilum (strain ATCC BAA-1232 / LMG 22953 / PM1).